Consider the following 662-residue polypeptide: 72 kDa type IV collagenase (662 aa).

The first 29 residues, 1 to 29 (MEALGARGALAGFLRALCVLGCLLGRATA), serve as a signal peptide directing secretion. Positions 30–109 (PPSPVIKFPG…PRCGNPDVAN (80 aa)) are cleaved as a propeptide — activation peptide. The short motif at 100 to 107 (PRCGNPDV) is the Cysteine switch element. Zn(2+) is bound at residue cysteine 102. A collagenase-like 1 region spans residues 110 to 221 (YNFFPRKPKW…LWTLGEGQVV (112 aa)). Residues aspartate 134 and aspartate 168 each coordinate Ca(2+). Zn(2+) is bound by residues histidine 178 and aspartate 180. The Ca(2+) site is built by aspartate 185 and glycine 186. Histidine 193 lines the Zn(2+) pocket. Glycine 200, glycine 202, and aspartate 204 together coordinate Ca(2+). Histidine 206 contributes to the Zn(2+) binding site. Positions 208, 209, and 211 each coordinate Ca(2+). The tract at residues 222 to 396 (RVKYGNADGE…WGFCPDQGYS (175 aa)) is collagen-binding. 3 consecutive Fibronectin type-II domains span residues 228–276 (ADGE…FCPH), 286–334 (ADGQ…FCPE), and 344–392 (SEGA…FCPD). Disulfide bonds link cysteine 233–cysteine 259, cysteine 247–cysteine 274, cysteine 291–cysteine 317, cysteine 305–cysteine 332, cysteine 349–cysteine 375, and cysteine 363–cysteine 390. The collagenase-like 2 stretch occupies residues 397 to 467 (LFLVAAHEFG…GPTPTLGPVT (71 aa)). Residue histidine 403 participates in Zn(2+) binding. Residue glutamate 404 is part of the active site. The Zn(2+) site is built by histidine 407 and histidine 413. Residues 414-662 (SQDPGALMAP…GSIKTDWLGC (249 aa)) form a required for inhibitor TIMP2 binding region. The cysteines at positions 471 and 662 are disulfide-linked. Hemopexin repeat units lie at residues 474–518 (DIVF…WPEL), 519–565 (PEKI…GLPP), 567–615 (VQRV…WNAI), and 616–662 (PDHL…WLGC). Positions 478, 523, and 571 each coordinate Ca(2+). Asparagine 575 carries N-linked (GlcNAc...) asparagine glycosylation. Aspartate 620 lines the Ca(2+) pocket. A glycan (N-linked (GlcNAc...) asparagine) is linked at asparagine 644.

Belongs to the peptidase M10A family. As to quaternary structure, interacts (via the C-terminal hemopexin-like domains-containing region) with the integrin alpha-V/beta-3; the interaction promotes vascular invasion in angiogenic vessels and melamoma cells. Interacts (via the C-terminal PEX domain) with TIMP2 (via the C-terminal); the interaction inhibits the degradation activity. Interacts with GSK3B. Requires Ca(2+) as cofactor. Zn(2+) serves as cofactor. Phosphorylation on multiple sites modulates enzymatic activity. Phosphorylated by PKC in vitro. Post-translationally, the propeptide is processed by MMP14 (MT-MMP1) and MMP16 (MT-MMP3). Autocatalytic cleavage in the C-terminal produces the anti-angiogenic peptide, PEX. This processing appears to be facilitated by binding integrinv/beta3.

It is found in the secreted. Its subcellular location is the extracellular space. It localises to the extracellular matrix. The protein resides in the membrane. The protein localises to the nucleus. It carries out the reaction Cleavage of gelatin type I and collagen types IV, V, VII, X. Cleaves the collagen-like sequence Pro-Gln-Gly-|-Ile-Ala-Gly-Gln.. In terms of biological role, ubiquitinous metalloproteinase that is involved in diverse functions such as remodeling of the vasculature, angiogenesis, tissue repair, tumor invasion, inflammation, and atherosclerotic plaque rupture. As well as degrading extracellular matrix proteins, can also act on several nonmatrix proteins such as big endothelial 1 and beta-type CGRP promoting vasoconstriction. Also cleaves KISS at a Gly-|-Leu bond. Appears to have a role in myocardial cell death pathways. Contributes to myocardial oxidative stress by regulating the activity of GSK3beta. Cleaves GSK3beta in vitro. Involved in the formation of the fibrovascular tissues. Functionally, PEX, the C-terminal non-catalytic fragment of MMP2, possesses anti-angiogenic and anti-tumor properties and inhibits cell migration and cell adhesion to FGF2 and vitronectin. Ligand for integrin alpha-v/beta-3 on the surface of blood vessels. This Oryctolagus cuniculus (Rabbit) protein is 72 kDa type IV collagenase (MMP2).